Consider the following 245-residue polypeptide: Octopine transport system permease protein OccM (245 aa).

Helical transmembrane passes span 12–32 (FIALLAGIPLALKLAVFSIAV), 57–77 (FYIFAFRGTPLLVQIYIIYYG), 96–116 (AYWCALGALALNTAAYSAEIM), 163–183 (VLMVKSTSLASTITLMEITGI), and 199–219 (ACAGAIYLTMNFIAARLFALI). The ABC transmembrane type-1 domain maps to 19-216 (IPLALKLAVF…TMNFIAARLF (198 aa)).

This sequence belongs to the binding-protein-dependent transport system permease family. HisMQ subfamily.

The protein localises to the cell inner membrane. Component of the octopine active transport system probably consisting of four subunits: Q, M, P and T. This chain is Octopine transport system permease protein OccM (occM), found in Rhizobium meliloti (Ensifer meliloti).